Here is a 581-residue protein sequence, read N- to C-terminus: Intermediate filament protein ifa-2 (581 aa).

Disordered regions lie at residues 1–35 (MTDPDSYRSSITSRPSFNRTVTSSSQNYGAPGSGN) and 47–68 (SSVSSGLSPYGQNAASTIRDNR). Positions 1 to 74 (MTDPDSYRSS…RDNREREKKE (74 aa)) are head. Residues 7–28 (YRSSITSRPSFNRTVTSSSQNY) show a composition bias toward polar residues. Positions 71–424 (EKKEIMELND…QMLEGNSEGN (354 aa)) constitute an IF rod domain. Residues 75–106 (IMELNDRLASYIEKVRFLDAQNRKLDADLKML) are coil 1A. The segment at 107 to 120 (QGRFGKSTGSVKVM) is linker 1. A coil 1B region spans residues 121–258 (YEMEITTATN…RGFETELKEL (138 aa)). A linker 12 region spans residues 259-276 (QAQAARDTTSENREYFKN). The coil 2 stretch occupies residues 277 to 424 (ELANAMRDIR…QMLEGNSEGN (148 aa)). The interval 425–578 (GLRQLVEKVV…THIQRQSQQT (154 aa)) is tail. The tract at residues 449–469 (RVVKGEHSSRTSYQRSAKGNV) is disordered. Positions 457–574 (SRTSYQRSAK…EERATHIQRQ (118 aa)) constitute an LTD domain.

Belongs to the intermediate filament family. Forms some heteromeric filaments with ifb-1. In terms of tissue distribution, mainly expressed in regions of the hypodermis adjacent to muscle. Expressed in longitudinal stripes where the mechanosensory neurons interface with the hypodermis. Also expressed to the uterine seam and within the uterine-vulval cells.

Its subcellular location is the cell junction. The protein resides in the hemidesmosome. Its function is as follows. Cytoplasmic intermediate filaments provide mechanical strength to cells. Essential protein, involved in attachment structures in epidermal cells that connect muscles to the external cuticle. Probably acts by forming hypodermal hemidesmosome complexes that help mediate muscle-cuticle force transduction. Although expressed during embryogenesis, it is not required for embryonic development of muscle-cuticle linkages nor for the localization of other proteins to the hemidesmosomes in embryos. The sequence is that of Intermediate filament protein ifa-2 from Caenorhabditis elegans.